Here is a 385-residue protein sequence, read N- to C-terminus: G2/mitotic-specific cyclin-B3 (385 aa).

Over residues 1 to 16 the composition is skewed to polar residues; the sequence is MMLRSQAKNVDLTSQA. Disordered stretches follow at residues 1-48 and 63-88; these read MMLR…HSKG and SAKR…QKSR. Composition is skewed to basic and acidic residues over residues 17 to 28 and 63 to 80; these read DSRHQQKRKQAE and SAKR…RDVE.

It belongs to the cyclin family. Cyclin AB subfamily.

The protein resides in the nucleus. Its function is as follows. Could be involved at the G2/M (mitosis) transition. Interacts with the CDK1 and CDK2 protein kinases. G2/M cyclins accumulate steadily during G2 and are abruptly destroyed at mitosis. Plays a role during oocyte meiosis II. The protein is G2/mitotic-specific cyclin-B3 (cyb-3) of Caenorhabditis elegans.